The primary structure comprises 225 residues: Glutathione S-transferase U2 (225 aa).

Residues 6 to 85 enclose the GST N-terminal domain; it reads ESVKLLGFWI…YIDQTWNNNP (80 aa). Glutathione is bound by residues 16 to 17, 42 to 43, 56 to 57, and 69 to 70; these read SP, KK, KV, and ES. One can recognise a GST C-terminal domain in the interval 90–217; that stretch reads DPYEKAMVRF…EKHIERMKKI (128 aa). Phosphothreonine is present on Thr-151.

The protein belongs to the GST superfamily. Tau family.

It localises to the cytoplasm. The protein resides in the cytosol. It carries out the reaction RX + glutathione = an S-substituted glutathione + a halide anion + H(+). May be involved in the conjugation of reduced glutathione to a wide number of exogenous and endogenous hydrophobic electrophiles and have a detoxification role against certain herbicides. The chain is Glutathione S-transferase U2 (GSTU2) from Arabidopsis thaliana (Mouse-ear cress).